A 278-amino-acid chain; its full sequence is Anamorsin homolog (278 aa).

Positions 1-147 are N-terminal SAM-like domain; it reads MESVSHLVSN…EIGSSAALPF (147 aa). Residues 147-191 form a linker region; the sequence is FANKISLGGNSKMETAKMWTLSSQDFVDDDIDIIDENTLIEEDDF. Residues C204, C214, C217, and C219 each coordinate [2Fe-2S] cluster. Positions 204-219 are fe-S binding site A; that stretch reads CDSAKKKRKACKNCSC. Residues C239, C242, C250, and C253 each coordinate [4Fe-4S] cluster. 2 short sequence motifs (cx2C motif) span residues 239–242 and 250–253; these read CGSC and CSSC. The segment at 239–253 is fe-S binding site B; the sequence is CGSCYLGDAFRCSSC.

Belongs to the anamorsin family. As to quaternary structure, monomer. [2Fe-2S] cluster is required as a cofactor. It depends on [4Fe-4S] cluster as a cofactor.

It localises to the cytoplasm. The protein resides in the mitochondrion intermembrane space. Component of the cytosolic iron-sulfur (Fe-S) protein assembly (CIA) machinery. Required for the maturation of extramitochondrial Fe-S proteins. Part of an electron transfer chain functioning in an early step of cytosolic Fe-S biogenesis, facilitating the de novo assembly of a [4Fe-4S] cluster on the cytosolic Fe-S scaffold complex. Electrons are transferred from NADPH via a FAD- and FMN-containing diflavin oxidoreductase. Together with the diflavin oxidoreductase, also required for the assembly of the diferric tyrosyl radical cofactor of ribonucleotide reductase (RNR), probably by providing electrons for reduction during radical cofactor maturation in the catalytic small subunit. This chain is Anamorsin homolog, found in Trichoplax adhaerens (Trichoplax reptans).